A 1663-amino-acid polypeptide reads, in one-letter code: Kotanin synthase (1663 aa).

An N-terminal acylcarrier protein transacylase domain (SAT) region spans residues arginine 19–histidine 168. Residues aspartate 301–glutamate 731 enclose the Ketosynthase family 3 (KS3) domain. Residues cysteine 474, histidine 609, and histidine 650 each act as for beta-ketoacyl synthase activity in the active site. Residues phenylalanine 830–valine 1149 are malonyl-CoA:ACP transacylase (MAT) domain. Residues threonine 1209–aspartate 1527 form a product template (PT) domain region. The tract at residues histidine 1213–serine 1349 is N-terminal hotdog fold. Residues histidine 1213–asparagine 1523 form the PKS/mFAS DH domain. Residue histidine 1245 is the Proton acceptor; for dehydratase activity of the active site. A C-terminal hotdog fold region spans residues glutamine 1376 to asparagine 1523. The Proton donor; for dehydratase activity role is filled by aspartate 1434. The interval aspartate 1544 to valine 1580 is disordered. The Carrier domain maps to lysine 1586–tryptophan 1663. O-(pantetheine 4'-phosphoryl)serine is present on serine 1623.

The cofactor is pantetheine 4'-phosphate.

It participates in secondary metabolite biosynthesis. Non-reducing polyketide synthase; part of the gene cluster that mediates the biosynthesis of the bicoumarin kotanin. The non-reducing polyketide synthase ktnS first catalyzes the formation of the pentaketidic 4,7-dihydroxy-5-methylcoumarin from acetyl coenzyme A and 4 malonyl coenzyme A molecules. Further O-methylation by ktnB leads to the formation of 7-demethylsiderin. Then, an oxidative phenol coupling catalyzed by the cytochrome P450 monooxygenase ktnC forms the 8,8'-dimer P-orlandin via dimerization the monomeric precursor, 7-demethylsiderin. P-orlandin is subsequently O-methylated in a stepwise fashion to demethylkotanin and kotanin. In Aspergillus niger (strain ATCC MYA-4892 / CBS 513.88 / FGSC A1513), this protein is Kotanin synthase.